The following is an 84-amino-acid chain: Translational regulator CsrA (84 aa).

The protein belongs to the CsrA/RsmA family. As to quaternary structure, homodimer; the beta-strands of each monomer intercalate to form a hydrophobic core, while the alpha-helices form wings that extend away from the core.

It localises to the cytoplasm. Functionally, a translational regulator that binds mRNA to regulate translation initiation and/or mRNA stability. Usually binds in the 5'-UTR at or near the Shine-Dalgarno sequence preventing ribosome-binding, thus repressing translation. Its main target seems to be the major flagellin gene, while its function is anatagonized by FliW. The chain is Translational regulator CsrA from Leptospira borgpetersenii serovar Hardjo-bovis (strain JB197).